We begin with the raw amino-acid sequence, 247 residues long: 5-oxoprolinase subunit A (247 aa).

The protein belongs to the LamB/PxpA family. Forms a complex composed of PxpA, PxpB and PxpC.

The enzyme catalyses 5-oxo-L-proline + ATP + 2 H2O = L-glutamate + ADP + phosphate + H(+). In terms of biological role, catalyzes the cleavage of 5-oxoproline to form L-glutamate coupled to the hydrolysis of ATP to ADP and inorganic phosphate. In Klebsiella pneumoniae subsp. pneumoniae (strain ATCC 700721 / MGH 78578), this protein is 5-oxoprolinase subunit A.